The following is a 342-amino-acid chain: Isopentenyl-diphosphate delta-isomerase (342 aa).

11-12 contacts substrate; the sequence is RK. FMN is bound by residues Ser-68, 69–71, Ser-99, and Asn-127; that span reads SMT. Residue 99–101 coordinates substrate; it reads SMR. Gln-162 contributes to the substrate binding site. Glu-163 is a Mg(2+) binding site. Residues Lys-194, Thr-224, 274–276, and 295–296 each bind FMN; these read GFK and AG.

This sequence belongs to the IPP isomerase type 2 family. Homooctamer. Dimer of tetramers. It depends on FMN as a cofactor. The cofactor is NADPH. Requires Mg(2+) as cofactor.

It is found in the cytoplasm. The enzyme catalyses isopentenyl diphosphate = dimethylallyl diphosphate. Its function is as follows. Involved in the biosynthesis of isoprenoids. Catalyzes the 1,3-allylic rearrangement of the homoallylic substrate isopentenyl (IPP) to its allylic isomer, dimethylallyl diphosphate (DMAPP). The polypeptide is Isopentenyl-diphosphate delta-isomerase (Rickettsia conorii (strain ATCC VR-613 / Malish 7)).